We begin with the raw amino-acid sequence, 272 residues long: Phosphatidylglycerol--prolipoprotein diacylglyceryl transferase (272 aa).

The next 4 membrane-spanning stretches (helical) occupy residues 24 to 44, 59 to 79, 102 to 122, and 129 to 149; these read WYGIAYVLALLVALWVAKWIA, YFIWVEVGVILGARLGYILFY, FIGIRGMSYHGAVIGFLIASF, and GVKFWMLMDLVGISVPLGYVF. Arg-151 provides a ligand contact to a 1,2-diacyl-sn-glycero-3-phospho-(1'-sn-glycerol). 3 helical membrane-spanning segments follow: residues 180 to 200, 208 to 228, and 244 to 264; these read PSQLYEAFLEGIVLFVILYAW, GQLGIMYLILYALARFVAEFW, and MGQLLSLAMAIPCLVLWGYLA.

Belongs to the Lgt family.

The protein resides in the cell inner membrane. It carries out the reaction L-cysteinyl-[prolipoprotein] + a 1,2-diacyl-sn-glycero-3-phospho-(1'-sn-glycerol) = an S-1,2-diacyl-sn-glyceryl-L-cysteinyl-[prolipoprotein] + sn-glycerol 1-phosphate + H(+). It participates in protein modification; lipoprotein biosynthesis (diacylglyceryl transfer). In terms of biological role, catalyzes the transfer of the diacylglyceryl group from phosphatidylglycerol to the sulfhydryl group of the N-terminal cysteine of a prolipoprotein, the first step in the formation of mature lipoproteins. The chain is Phosphatidylglycerol--prolipoprotein diacylglyceryl transferase from Wolinella succinogenes (strain ATCC 29543 / DSM 1740 / CCUG 13145 / JCM 31913 / LMG 7466 / NCTC 11488 / FDC 602W) (Vibrio succinogenes).